We begin with the raw amino-acid sequence, 206 residues long: MDLLIKTLDGNEVGKLKVSESVFGLVPREDILQRVVRWQLARRQQGTHQSQGRSDVSRTGAKMFKQKGTGRARHSSARAPQFRGGGKAHGPVVRSHAHTLPKKIRALGLRFALSAKLKADDLIVVDEFNVKDAKTRMLVSCFSKLGFDNALLIGGNEVDLNFSRATSNIPNIDILPIQGINVYDILRRSKLVLSKAAVEVLEERFK.

Residues 42 to 54 (RRQQGTHQSQGRS) show a composition bias toward polar residues. The disordered stretch occupies residues 42–93 (RRQQGTHQSQGRSDVSRTGAKMFKQKGTGRARHSSARAPQFRGGGKAHGPVV). Over residues 64-76 (FKQKGTGRARHSS) the composition is skewed to basic residues.

Belongs to the universal ribosomal protein uL4 family. Part of the 50S ribosomal subunit.

Functionally, one of the primary rRNA binding proteins, this protein initially binds near the 5'-end of the 23S rRNA. It is important during the early stages of 50S assembly. It makes multiple contacts with different domains of the 23S rRNA in the assembled 50S subunit and ribosome. Forms part of the polypeptide exit tunnel. In Bartonella henselae (strain ATCC 49882 / DSM 28221 / CCUG 30454 / Houston 1) (Rochalimaea henselae), this protein is Large ribosomal subunit protein uL4.